We begin with the raw amino-acid sequence, 400 residues long: Phosphoglycerate kinase (400 aa).

Residues 21-23 (DFN), arginine 36, 59-62 (HLGR), arginine 119, and arginine 160 each bind substrate. ATP contacts are provided by residues lysine 211, glutamate 329, and 356–359 (GGDS).

The protein belongs to the phosphoglycerate kinase family. Monomer.

The protein resides in the cytoplasm. It carries out the reaction (2R)-3-phosphoglycerate + ATP = (2R)-3-phospho-glyceroyl phosphate + ADP. It participates in carbohydrate degradation; glycolysis; pyruvate from D-glyceraldehyde 3-phosphate: step 2/5. The sequence is that of Phosphoglycerate kinase from Lactiplantibacillus plantarum (strain ATCC BAA-793 / NCIMB 8826 / WCFS1) (Lactobacillus plantarum).